A 380-amino-acid chain; its full sequence is Queuine tRNA-ribosyltransferase (380 aa).

Residue Asp96 is the Proton acceptor of the active site. Residues 96-100 (DSGGF), Asp150, Gln193, and Gly220 each bind substrate. The interval 251–257 (GVGAPDS) is RNA binding. Catalysis depends on Asp270, which acts as the Nucleophile. An RNA binding; important for wobble base 34 recognition region spans residues 275–279 (TRIAR). Cys308, Cys310, Cys313, and His339 together coordinate Zn(2+).

Belongs to the queuine tRNA-ribosyltransferase family. In terms of assembly, homodimer. Within each dimer, one monomer is responsible for RNA recognition and catalysis, while the other monomer binds to the replacement base PreQ1. Zn(2+) serves as cofactor.

It carries out the reaction 7-aminomethyl-7-carbaguanine + guanosine(34) in tRNA = 7-aminomethyl-7-carbaguanosine(34) in tRNA + guanine. It participates in tRNA modification; tRNA-queuosine biosynthesis. In terms of biological role, catalyzes the base-exchange of a guanine (G) residue with the queuine precursor 7-aminomethyl-7-deazaguanine (PreQ1) at position 34 (anticodon wobble position) in tRNAs with GU(N) anticodons (tRNA-Asp, -Asn, -His and -Tyr). Catalysis occurs through a double-displacement mechanism. The nucleophile active site attacks the C1' of nucleotide 34 to detach the guanine base from the RNA, forming a covalent enzyme-RNA intermediate. The proton acceptor active site deprotonates the incoming PreQ1, allowing a nucleophilic attack on the C1' of the ribose to form the product. After dissociation, two additional enzymatic reactions on the tRNA convert PreQ1 to queuine (Q), resulting in the hypermodified nucleoside queuosine (7-(((4,5-cis-dihydroxy-2-cyclopenten-1-yl)amino)methyl)-7-deazaguanosine). The polypeptide is Queuine tRNA-ribosyltransferase (Streptococcus mutans serotype c (strain ATCC 700610 / UA159)).